Consider the following 423-residue polypeptide: Gamma-glutamyl phosphate reductase (423 aa).

This sequence belongs to the gamma-glutamyl phosphate reductase family.

It localises to the cytoplasm. It carries out the reaction L-glutamate 5-semialdehyde + phosphate + NADP(+) = L-glutamyl 5-phosphate + NADPH + H(+). It participates in amino-acid biosynthesis; L-proline biosynthesis; L-glutamate 5-semialdehyde from L-glutamate: step 2/2. Catalyzes the NADPH-dependent reduction of L-glutamate 5-phosphate into L-glutamate 5-semialdehyde and phosphate. The product spontaneously undergoes cyclization to form 1-pyrroline-5-carboxylate. This is Gamma-glutamyl phosphate reductase from Brucella suis (strain ATCC 23445 / NCTC 10510).